The sequence spans 159 residues: Ribosomal RNA large subunit methyltransferase H (159 aa).

Residues L76, G108, and F127–L132 each bind S-adenosyl-L-methionine.

It belongs to the RNA methyltransferase RlmH family. As to quaternary structure, homodimer.

It is found in the cytoplasm. It carries out the reaction pseudouridine(1915) in 23S rRNA + S-adenosyl-L-methionine = N(3)-methylpseudouridine(1915) in 23S rRNA + S-adenosyl-L-homocysteine + H(+). Specifically methylates the pseudouridine at position 1915 (m3Psi1915) in 23S rRNA. The sequence is that of Ribosomal RNA large subunit methyltransferase H from Listeria monocytogenes serotype 4a (strain HCC23).